Consider the following 382-residue polypeptide: 2-epi-valiolone synthase (382 aa).

NAD(+)-binding positions include 92-95 (EKSK), 124-128 (GVVVD), 148-149 (TT), K161, K170, and 188-191 (HLRT). E203, H266, and H283 together coordinate Zn(2+).

The protein belongs to the sugar phosphate cyclases superfamily. EVS family. The cofactor is NAD(+). Requires Co(2+) as cofactor. Zn(2+) serves as cofactor.

The catalysed reaction is D-sedoheptulose 7-phosphate = 2-epi-valiolone + phosphate. Functionally, catalyzes the conversion of sedoheptulose 7-phosphate to 2-epi-valiolone, which may serve as an alternative precursor for aminocyclitol biosynthesis. The protein is 2-epi-valiolone synthase of Actinosynnema mirum (strain ATCC 29888 / DSM 43827 / JCM 3225 / NBRC 14064 / NCIMB 13271 / NRRL B-12336 / IMRU 3971 / 101).